The chain runs to 229 residues: Uracil-DNA glycosylase (229 aa).

D64 serves as the catalytic Proton acceptor.

The protein belongs to the uracil-DNA glycosylase (UDG) superfamily. UNG family.

The protein resides in the cytoplasm. It carries out the reaction Hydrolyzes single-stranded DNA or mismatched double-stranded DNA and polynucleotides, releasing free uracil.. Its function is as follows. Excises uracil residues from the DNA which can arise as a result of misincorporation of dUMP residues by DNA polymerase or due to deamination of cytosine. The sequence is that of Uracil-DNA glycosylase from Geobacillus kaustophilus (strain HTA426).